The following is a 166-amino-acid chain: Large ribosomal subunit protein uL10 (166 aa).

The protein belongs to the universal ribosomal protein uL10 family. In terms of assembly, part of the ribosomal stalk of the 50S ribosomal subunit. The N-terminus interacts with L11 and the large rRNA to form the base of the stalk. The C-terminus forms an elongated spine to which L12 dimers bind in a sequential fashion forming a multimeric L10(L12)X complex.

Functionally, forms part of the ribosomal stalk, playing a central role in the interaction of the ribosome with GTP-bound translation factors. This is Large ribosomal subunit protein uL10 from Staphylococcus carnosus (strain TM300).